We begin with the raw amino-acid sequence, 338 residues long: Tryptophan--tRNA ligase (338 aa).

ATP is bound by residues 11–13 (QPS) and 19–20 (GN). Residues 12 to 20 (PSGELSIGN) carry the 'HIGH' region motif. D135 contacts L-tryptophan. ATP-binding positions include 147–149 (GSD), V189, and 198–202 (KMSKS). Residues 198-202 (KMSKS) carry the 'KMSKS' region motif.

It belongs to the class-I aminoacyl-tRNA synthetase family. In terms of assembly, homodimer.

It localises to the cytoplasm. The catalysed reaction is tRNA(Trp) + L-tryptophan + ATP = L-tryptophyl-tRNA(Trp) + AMP + diphosphate + H(+). Catalyzes the attachment of tryptophan to tRNA(Trp). The polypeptide is Tryptophan--tRNA ligase (Vibrio vulnificus (strain CMCP6)).